The sequence spans 148 residues: Deoxyuridine 5'-triphosphate nucleotidohydrolase (148 aa).

Substrate-binding positions include 67–69, asparagine 80, 84–86, and methionine 94; these read RSG and LID.

The protein belongs to the dUTPase family. The cofactor is Mg(2+).

It catalyses the reaction dUTP + H2O = dUMP + diphosphate + H(+). It functions in the pathway pyrimidine metabolism; dUMP biosynthesis; dUMP from dCTP (dUTP route): step 2/2. Its function is as follows. This enzyme is involved in nucleotide metabolism: it produces dUMP, the immediate precursor of thymidine nucleotides and it decreases the intracellular concentration of dUTP so that uracil cannot be incorporated into DNA. This is Deoxyuridine 5'-triphosphate nucleotidohydrolase from Burkholderia lata (strain ATCC 17760 / DSM 23089 / LMG 22485 / NCIMB 9086 / R18194 / 383).